A 48-amino-acid polypeptide reads, in one-letter code: uncharacterized protein (48 aa).

The helical transmembrane segment at 21-43 threads the bilayer; the sequence is SIFVSLGVFAVSVAILKSRLGNF.

The protein localises to the membrane. This is an uncharacterized protein from Schizosaccharomyces pombe (strain 972 / ATCC 24843) (Fission yeast).